The chain runs to 1253 residues: Guanine nucleotide exchange factor SDC25 (1253 aa).

The 73-residue stretch at Gln-26–Asn-98 folds into the SH3 domain. Residues Leu-624 to Glu-649 form a disordered region. In terms of domain architecture, N-terminal Ras-GEF spans Gly-782–Phe-914. The 248-residue stretch at Val-952–Pro-1199 folds into the Ras-GEF domain. Positions Arg-1202–Lys-1253 are disordered. A compositionally biased stretch (basic and acidic residues) spans Ser-1215 to Pro-1237. Over residues Gln-1240–Lys-1253 the composition is skewed to basic residues.

Promotes the exchange of Ras-bound GDP by GTP. The protein is Guanine nucleotide exchange factor SDC25 (SDC25) of Saccharomyces cerevisiae (Baker's yeast).